We begin with the raw amino-acid sequence, 85 residues long: Antibacterial factor-related peptide 2 (85 aa).

The first 17 residues, 1-17 (MFVRSLFLALLLATIVA), serve as a signal peptide directing secretion. Positions 82 to 85 (IKRG) are excised as a propeptide.

Expressed in the pharynx (at protein level). Detected in pharyngeal neurons and secretory cells.

Its subcellular location is the secreted. Exhibits antimicrobial activity against the Gram-positive bacteria B.subtilis IFO 3134, K.varians MAFF 118076 and S.aureus ATCC 6538P, the Gram-negative bacteria A.tumefaciens MAFF 1001, B.bacteriovorus MAFF 106101 and K.pneumoniae MAFF 519002, and the yeasts C.krusei MAFF 114085, K.thermotolerans MAFF 113848 and T.delbrueckii MAFF 113811. The protein is Antibacterial factor-related peptide 2 of Caenorhabditis elegans.